The primary structure comprises 358 residues: UPF0421 protein BT9727_2513 (358 aa).

4 consecutive transmembrane segments (helical) span residues 19-39 (IAVF…IFAV), 74-94 (FTFF…FTIV), 109-129 (TLTA…AFLI), and 131-151 (LATT…ILPP).

It belongs to the UPF0421 family.

The protein resides in the cell membrane. The chain is UPF0421 protein BT9727_2513 from Bacillus thuringiensis subsp. konkukian (strain 97-27).